Reading from the N-terminus, the 104-residue chain is Small ribosomal subunit protein uS10 (104 aa).

It belongs to the universal ribosomal protein uS10 family. As to quaternary structure, part of the 30S ribosomal subunit.

Involved in the binding of tRNA to the ribosomes. The chain is Small ribosomal subunit protein uS10 from Dichelobacter nodosus (strain VCS1703A).